The primary structure comprises 289 residues: Cell division protein ZipA (289 aa).

Residue Met1 is a topological domain, periplasmic. Residues Glu2–Phe22 traverse the membrane as a helical segment. Residues Asp23 to Gly289 are Cytoplasmic-facing. The segment at Asp48–Lys141 is disordered. Basic and acidic residues-rich tracts occupy residues Leu64–Leu77, Arg85–Pro106, and Gly123–Lys141.

It belongs to the ZipA family. As to quaternary structure, interacts with FtsZ via their C-terminal domains.

The protein resides in the cell inner membrane. Essential cell division protein that stabilizes the FtsZ protofilaments by cross-linking them and that serves as a cytoplasmic membrane anchor for the Z ring. Also required for the recruitment to the septal ring of downstream cell division proteins. The protein is Cell division protein ZipA of Pseudomonas savastanoi pv. phaseolicola (strain 1448A / Race 6) (Pseudomonas syringae pv. phaseolicola (strain 1448A / Race 6)).